Reading from the N-terminus, the 178-residue chain is Large ribosomal subunit protein uL5 (178 aa).

A2 carries the post-translational modification N-acetylalanine. K38 participates in a covalent cross-link: Glycyl lysine isopeptide (Lys-Gly) (interchain with G-Cter in SUMO2). Phosphothreonine is present on residues T44 and T47. At K52 the chain carries N6-acetyllysine; alternate. K52 is covalently cross-linked (Glycyl lysine isopeptide (Lys-Gly) (interchain with G-Cter in SUMO2); alternate). An N6-acetyllysine modification is found at K85. K154 is covalently cross-linked (Glycyl lysine isopeptide (Lys-Gly) (interchain with G-Cter in SUMO2)).

Belongs to the universal ribosomal protein uL5 family. As to quaternary structure, component of the large ribosomal subunit (LSU). Part of the 5S RNP complex, which is a LSU subcomplex composed of the 5S RNA, RPL5 and RPL11. Component of a hexameric 5S RNP precursor complex, composed of 5S RNA, RRS1, RPF2/BXDC1, RPL5, RPL11 and HEATR3; this complex acts as a precursor for ribosome assembly. Interacts with PML. Interacts with MDM2 (via its RanBP2-type zinc finger domain); negatively regulates MDM2-mediated TP53 ubiquitination and degradation. Interacts with NOP53; retains RPL11 into the nucleolus.

It is found in the nucleus. Its subcellular location is the nucleolus. The protein resides in the cytoplasm. Functionally, component of the ribosome, a large ribonucleoprotein complex responsible for the synthesis of proteins in the cell. The small ribosomal subunit (SSU) binds messenger RNAs (mRNAs) and translates the encoded message by selecting cognate aminoacyl-transfer RNA (tRNA) molecules. The large subunit (LSU) contains the ribosomal catalytic site termed the peptidyl transferase center (PTC), which catalyzes the formation of peptide bonds, thereby polymerizing the amino acids delivered by tRNAs into a polypeptide chain. The nascent polypeptides leave the ribosome through a tunnel in the LSU and interact with protein factors that function in enzymatic processing, targeting, and the membrane insertion of nascent chains at the exit of the ribosomal tunnel. As part of the 5S RNP/5S ribonucleoprotein particle it is an essential component of the LSU, required for its formation and the maturation of rRNAs. It also couples ribosome biogenesis to p53/TP53 activation. As part of the 5S RNP it accumulates in the nucleoplasm and inhibits MDM2, when ribosome biogenesis is perturbed, mediating the stabilization and the activation of TP53. Promotes nucleolar location of PML. The protein is Large ribosomal subunit protein uL5 (RPL11) of Oryctolagus cuniculus (Rabbit).